The following is a 199-amino-acid chain: Thymidine kinase (199 aa).

ATP contacts are provided by residues 9-16 (GAMSSGKT) and 93-96 (DEAQ). Glu94 functions as the Proton acceptor in the catalytic mechanism. Residues Cys151, Cys154, Cys188, and His191 each coordinate Zn(2+).

The protein belongs to the thymidine kinase family. Homotetramer.

It is found in the cytoplasm. It catalyses the reaction thymidine + ATP = dTMP + ADP + H(+). This Lactobacillus acidophilus (strain ATCC 700396 / NCK56 / N2 / NCFM) protein is Thymidine kinase.